Reading from the N-terminus, the 247-residue chain is Flagellin B1 (247 aa).

Residues 1 to 20 (MNKLLRKVRKAFSLKADNKA) constitute a propeptide that is removed on maturation.

This sequence belongs to the archaeal flagellin family. In terms of processing, glycosylated.

Its subcellular location is the archaeal flagellum. Functionally, flagellin is the subunit protein which polymerizes to form the filaments of archaeal flagella. In Thermoplasma volcanium (strain ATCC 51530 / DSM 4299 / JCM 9571 / NBRC 15438 / GSS1), this protein is Flagellin B1.